The following is a 393-amino-acid chain: Beta-1,4-galactosyltransferase 3 (393 aa).

Topologically, residues 1–10 (MLRRLLERPC) are cytoplasmic. Residues 11 to 31 (TLALLVGSQLAVMMYLSLGGF) form a helical; Signal-anchor for type II membrane protein membrane-spanning segment. Topologically, residues 32-393 (RSLSALFGRD…ANHTALRGSH (362 aa)) are lumenal. The N-linked (GlcNAc...) asparagine glycan is linked to Asn-57. Cys-77 and Cys-119 form a disulfide bridge. UDP-alpha-D-galactose is bound at residue 130–134 (PHRAR). N-linked (GlcNAc...) asparagine glycosylation is present at Asn-166. Residues 169–171 (FNR), 196–197 (VD), Tyr-226, and Trp-258 each bind UDP-alpha-D-galactose. Cys-190 and Cys-209 are oxidised to a cystine. A Mn(2+)-binding site is contributed by Asp-197. Residue 260–263 (GEDD) coordinates N-acetyl-D-glucosamine. His-291 is a binding site for Mn(2+). 291-293 (HRG) is a UDP-alpha-D-galactose binding site. Arg-303 is a binding site for N-acetyl-D-glucosamine. Residues Asn-337 and Asn-385 are each glycosylated (N-linked (GlcNAc...) asparagine). The disordered stretch occupies residues 339 to 393 (TADIGTDPRGPRAPSGPRYPPGSSQAFRQEMLQRRPPARPGPPPTANHTALRGSH).

Belongs to the glycosyltransferase 7 family. The cofactor is Mn(2+).

The protein resides in the golgi apparatus. The protein localises to the golgi stack membrane. It catalyses the reaction an N-acetyl-beta-D-glucosaminyl derivative + UDP-alpha-D-galactose = a beta-D-galactosyl-(1-&gt;4)-N-acetyl-beta-D-glucosaminyl derivative + UDP + H(+). It carries out the reaction N-acetyl-D-glucosamine + UDP-alpha-D-galactose = beta-D-galactosyl-(1-&gt;4)-N-acetyl-D-glucosamine + UDP + H(+). The catalysed reaction is a beta-D-GlcNAc-(1-&gt;3)-beta-D-Gal-(1-&gt;4)-beta-D-Glc-(1&lt;-&gt;1)-Cer(d18:1(4E)) + UDP-alpha-D-galactose = a neolactoside nLc4Cer(d18:1(4E)) + UDP + H(+). The enzyme catalyses a beta-D-glucosylceramide + UDP-alpha-D-galactose = a beta-D-galactosyl-(1-&gt;4)-beta-D-glucosyl-(1&lt;-&gt;1)-ceramide + UDP + H(+). It catalyses the reaction a neolactoside IV(3)-beta-GlcNAc-nLc4Cer + UDP-alpha-D-galactose = a neolactoside nLc6Cer + UDP + H(+). It participates in protein modification; protein glycosylation. Functionally, responsible for the synthesis of complex-type N-linked oligosaccharides in many glycoproteins as well as the carbohydrate moieties of glycolipids. The protein is Beta-1,4-galactosyltransferase 3 (B4GALT3) of Pongo abelii (Sumatran orangutan).